Consider the following 505-residue polypeptide: Geissoschizine oxidase (505 aa).

Residues 9–29 traverse the membrane as a helical segment; sequence FSSPAFFLLLPFLFLLIKPLI. Cysteine 443 contributes to the heme binding site.

This sequence belongs to the cytochrome P450 family. Heme is required as a cofactor. As to expression, mainly expressed in roots.

Its subcellular location is the membrane. The enzyme catalyses (19E)-geissoschizine + reduced [NADPH--hemoprotein reductase] + O2 = akuammicine + formate + oxidized [NADPH--hemoprotein reductase] + H2O + H(+). It catalyses the reaction (19E)-geissoschizine + reduced [NADPH--hemoprotein reductase] + O2 = 3,17-didehydrostemmadenine + oxidized [NADPH--hemoprotein reductase] + 2 H2O. The catalysed reaction is 3,17-didehydrostemmadenine = 17-dehydropreakuammicine. It functions in the pathway alkaloid biosynthesis. Its function is as follows. Monooxygenase involved in the biosynthesis of curare monoterpene indole alkaloids (MIAs), natural products such as strychnine, a neurotoxic compound used as a pesticide to control rodents, and its pharmacologically active derivatives, including brucine, used to regulate blood pressure. Curare alkaloids act as animal glycine receptor antagonists. Catalyzes the conversion of geissoschizine to dehydropreakuammicine by cyclization, which is spontaneously converted into akuammicine by aromatization. The chain is Geissoschizine oxidase from Strychnos nux-vomica (Poison nut).